Reading from the N-terminus, the 221-residue chain is Small ribosomal subunit protein uS3 (221 aa).

In terms of domain architecture, KH type-2 spans 39–107; that stretch reads IRNYIKEKLY…TVILNIIEVK (69 aa).

The protein belongs to the universal ribosomal protein uS3 family. As to quaternary structure, part of the 30S ribosomal subunit. Forms a tight complex with proteins S10 and S14.

Binds the lower part of the 30S subunit head. Binds mRNA in the 70S ribosome, positioning it for translation. The chain is Small ribosomal subunit protein uS3 from Caldanaerobacter subterraneus subsp. tengcongensis (strain DSM 15242 / JCM 11007 / NBRC 100824 / MB4) (Thermoanaerobacter tengcongensis).